The sequence spans 152 residues: Deoxyuridine 5'-triphosphate nucleotidohydrolase (152 aa).

Residues R71 to G73, N84, L88 to D90, and M98 each bind substrate.

It belongs to the dUTPase family. Mg(2+) serves as cofactor.

The enzyme catalyses dUTP + H2O = dUMP + diphosphate + H(+). Its pathway is pyrimidine metabolism; dUMP biosynthesis; dUMP from dCTP (dUTP route): step 2/2. Its function is as follows. This enzyme is involved in nucleotide metabolism: it produces dUMP, the immediate precursor of thymidine nucleotides and it decreases the intracellular concentration of dUTP so that uracil cannot be incorporated into DNA. This is Deoxyuridine 5'-triphosphate nucleotidohydrolase from Cronobacter sakazakii (strain ATCC BAA-894) (Enterobacter sakazakii).